The primary structure comprises 196 residues: Acyl-homoserine-lactone synthase (196 aa).

The protein belongs to the autoinducer synthase family.

It catalyses the reaction a fatty acyl-[ACP] + S-adenosyl-L-methionine = an N-acyl-L-homoserine lactone + S-methyl-5'-thioadenosine + holo-[ACP] + H(+). In terms of biological role, required for the synthesis of a yet unknown N-aceyl-homoserine lactone (N-aceyl-HSL), an autoinducer molecule which binds to PhzR and thus regulates phenazine production. This chain is Acyl-homoserine-lactone synthase (phzI), found in Pseudomonas fluorescens.